We begin with the raw amino-acid sequence, 290 residues long: NAD kinase (290 aa).

The Proton acceptor role is filled by Asp72. Residues 72–73 (DG), 146–147 (NE), Arg174, Asp176, and 187–192 (TAYALS) each bind NAD(+).

The protein belongs to the NAD kinase family. Requires a divalent metal cation as cofactor.

It localises to the cytoplasm. The enzyme catalyses NAD(+) + ATP = ADP + NADP(+) + H(+). In terms of biological role, involved in the regulation of the intracellular balance of NAD and NADP, and is a key enzyme in the biosynthesis of NADP. Catalyzes specifically the phosphorylation on 2'-hydroxyl of the adenosine moiety of NAD to yield NADP. The sequence is that of NAD kinase from Methylococcus capsulatus (strain ATCC 33009 / NCIMB 11132 / Bath).